Here is a 524-residue protein sequence, read N- to C-terminus: Origin of replication complex subunit 5 (524 aa).

A compositionally biased stretch (low complexity) spans 1-19 (MSQPVTPRRTTRSSASASP). A disordered region spans residues 1-56 (MSQPVTPRRTTRSSASASPSPAPASPTSPPKSRPKPSPRRQLLAAAAAPPKEDGSS). Pro residues predominate over residues 20–31 (SPAPASPTSPPK). Low complexity predominate over residues 39 to 49 (RRQLLAAAAAP). 90–97 (GGAATGKT) is an ATP binding site.

This sequence belongs to the ORC5 family. As to quaternary structure, component of the origin recognition complex (ORC) composed of at least ORC1, ORC2, ORC3, ORC4, ORC5 and ORC6. ORC is regulated in a cell-cycle and development dependent manner. It is sequentially assembled at the exit from anaphase of mitosis and disassembled as cells enter S phase.

It localises to the nucleus. Component of the origin recognition complex (ORC) that binds origins of replication. DNA-binding is ATP-dependent. The specific DNA sequences that define origins of replication have not been identified yet. ORC is required to assemble the pre-replication complex necessary to initiate DNA replication. This Oryza sativa subsp. indica (Rice) protein is Origin of replication complex subunit 5.